A 398-amino-acid chain; its full sequence is Histidinol-phosphate aminotransferase (398 aa).

The span at 1–10 shows a compositional bias: polar residues; the sequence is MTGQRATPQP. Residues 1-30 form a disordered region; it reads MTGQRATPQPTLDDLPLRDDLRGKSPYGAP. Lysine 234 is subject to N6-(pyridoxal phosphate)lysine.

Belongs to the class-II pyridoxal-phosphate-dependent aminotransferase family. Histidinol-phosphate aminotransferase subfamily. Homodimer. Pyridoxal 5'-phosphate is required as a cofactor.

The catalysed reaction is L-histidinol phosphate + 2-oxoglutarate = 3-(imidazol-4-yl)-2-oxopropyl phosphate + L-glutamate. It participates in amino-acid biosynthesis; L-histidine biosynthesis; L-histidine from 5-phospho-alpha-D-ribose 1-diphosphate: step 7/9. This Mycolicibacterium paratuberculosis (strain ATCC BAA-968 / K-10) (Mycobacterium paratuberculosis) protein is Histidinol-phosphate aminotransferase.